Here is a 351-residue protein sequence, read N- to C-terminus: Ribosomal RNA large subunit methyltransferase N (351 aa).

Residue glutamate 92 is the Proton acceptor of the active site. One can recognise a Radical SAM core domain in the interval 105–337 (GHPRSTICVS…CTVRVEKGTE (233 aa)). Cysteine 112 and cysteine 342 are joined by a disulfide. [4Fe-4S] cluster contacts are provided by cysteine 119, cysteine 123, and cysteine 126. S-adenosyl-L-methionine is bound by residues 169–170 (GE), serine 201, 224–226 (SLH), and asparagine 300. Cysteine 342 (S-methylcysteine intermediate) is an active-site residue.

It belongs to the radical SAM superfamily. RlmN family. It depends on [4Fe-4S] cluster as a cofactor.

The protein resides in the cytoplasm. The enzyme catalyses adenosine(2503) in 23S rRNA + 2 reduced [2Fe-2S]-[ferredoxin] + 2 S-adenosyl-L-methionine = 2-methyladenosine(2503) in 23S rRNA + 5'-deoxyadenosine + L-methionine + 2 oxidized [2Fe-2S]-[ferredoxin] + S-adenosyl-L-homocysteine. Specifically methylates position 2 of adenine 2503 in 23S rRNA. This is Ribosomal RNA large subunit methyltransferase N from Nitrosopumilus maritimus (strain SCM1).